Consider the following 134-residue polypeptide: Large ribosomal subunit protein uL16c (134 aa).

This sequence belongs to the universal ribosomal protein uL16 family. As to quaternary structure, part of the 50S ribosomal subunit.

The protein resides in the plastid. It is found in the chloroplast. The polypeptide is Large ribosomal subunit protein uL16c (Pinus thunbergii (Japanese black pine)).